The sequence spans 350 residues: Histidinol-phosphate aminotransferase 1 (350 aa).

Lysine 209 is modified (N6-(pyridoxal phosphate)lysine).

Belongs to the class-II pyridoxal-phosphate-dependent aminotransferase family. Histidinol-phosphate aminotransferase subfamily. As to quaternary structure, homodimer. The cofactor is pyridoxal 5'-phosphate.

It carries out the reaction L-histidinol phosphate + 2-oxoglutarate = 3-(imidazol-4-yl)-2-oxopropyl phosphate + L-glutamate. It functions in the pathway amino-acid biosynthesis; L-histidine biosynthesis; L-histidine from 5-phospho-alpha-D-ribose 1-diphosphate: step 7/9. In Bradyrhizobium diazoefficiens (strain JCM 10833 / BCRC 13528 / IAM 13628 / NBRC 14792 / USDA 110), this protein is Histidinol-phosphate aminotransferase 1 (hisC1).